We begin with the raw amino-acid sequence, 371 residues long: MNKLPQETRVVIGMSGGVDSSVAALLLKEQGYDVIGIFMKNWDDTDANGVCTATEDYNDVIEVCNQIGIPYYAVNFEKQYWDKVFTYFLDEYRAGRTPNPDVMCNKEIKFKAFLEHAIALGADYVATGHYARVAYMDGEYKMLRGVDDNKDQTYFLNQLSQEQLSKTMFPLGELKKPQIREMATEAGLATAAKKDSTGICFIGERNFKDFLSNYLPAQPGVMQTLSGEVKGKHDGLMYYTIGQRHGLGIGGNGDPWFAVGKNLKENILYVDQGFHNELLYGDEVIATNVGWVSNKAKEKEFTCTAKFRYRQADNKVTVQIVDENTVRILCDEPIRAITPGQAVVFYDGDECLGGATIDEVYHSGKKLDYLG.

Residues 13 to 20 and Met39 contribute to the ATP site; that span reads GMSGGVDS. The interval 99 to 101 is interaction with target base in tRNA; that stretch reads NPD. The Nucleophile role is filled by Cys104. An intrachain disulfide couples Cys104 to Cys200. Gly128 contacts ATP. The tract at residues 150-152 is interaction with tRNA; the sequence is KDQ. The Cysteine persulfide intermediate role is filled by Cys200. An interaction with tRNA region spans residues 308–309; it reads RY.

Belongs to the MnmA/TRMU family.

Its subcellular location is the cytoplasm. It catalyses the reaction S-sulfanyl-L-cysteinyl-[protein] + uridine(34) in tRNA + AH2 + ATP = 2-thiouridine(34) in tRNA + L-cysteinyl-[protein] + A + AMP + diphosphate + H(+). Functionally, catalyzes the 2-thiolation of uridine at the wobble position (U34) of tRNA, leading to the formation of s(2)U34. The protein is tRNA-specific 2-thiouridylase MnmA of Bacillus mycoides (strain KBAB4) (Bacillus weihenstephanensis).